Here is a 274-residue protein sequence, read N- to C-terminus: MSGTKIHPTALVEKGAQLGENVFIGPFCHIGPEAVIDDGCSLMNHVVIMGKTTLGAKSKVFSHAVLGTDPQNNKHKGGYTTLSIGKNCTIREGVTMHRGSDSSVGMTIVGDDCQFFCYAHVAHDCRVGSHVTFANNAMIAGHVTVGDYVIIGGGSAVHQFVRIGHHAFIGGVSALVGDLIPYGTAVGVQAKLAGLNIIGMKRAGLERKDIHALRHAVAMLFDHSKPFKERVNDVSSFYSTSQSVLDVVNFIKEEGKRFYCTPKFEDDRIKVNKD.

The protein belongs to the transferase hexapeptide repeat family. LpxA subfamily. In terms of assembly, homotrimer.

The protein localises to the cytoplasm. It carries out the reaction a (3R)-hydroxyacyl-[ACP] + UDP-N-acetyl-alpha-D-glucosamine = a UDP-3-O-[(3R)-3-hydroxyacyl]-N-acetyl-alpha-D-glucosamine + holo-[ACP]. The protein operates within glycolipid biosynthesis; lipid IV(A) biosynthesis; lipid IV(A) from (3R)-3-hydroxytetradecanoyl-[acyl-carrier-protein] and UDP-N-acetyl-alpha-D-glucosamine: step 1/6. Its function is as follows. Involved in the biosynthesis of lipid A, a phosphorylated glycolipid that anchors the lipopolysaccharide to the outer membrane of the cell. The polypeptide is Acyl-[acyl-carrier-protein]--UDP-N-acetylglucosamine O-acyltransferase (Bartonella quintana (strain Toulouse) (Rochalimaea quintana)).